Here is a 504-residue protein sequence, read N- to C-terminus: Protein FMP42 (504 aa).

The Vacuolar portion of the chain corresponds to 1-11; that stretch reads MTSTRTLRYAQ. A helical membrane pass occupies residues 12–32; it reads VACACIWCLFSAGIIFGFAAL. The Cytoplasmic portion of the chain corresponds to 33–64; the sequence is KPILISEGVYHELCDPKDGDRLLCTAQDLKLN. The helical transmembrane segment at 65 to 85 threads the bilayer; sequence FIFALSATVTNIMALPVGKIL. The Vacuolar segment spans residues 86-91; the sequence is DMYGPR. A helical transmembrane segment spans residues 92-112; that stretch reads VCGIIGSCLLFLASGNFISAK. Residues 113-119 lie on the Cytoplasmic side of the membrane; the sequence is HLVSLWD. The helical transmembrane segment at 120–140 threads the bilayer; the sequence is PYLVGYTLLAVAGPFVFISCF. The Vacuolar segment spans residues 141–150; sequence QLANSFPQRS. A helical membrane pass occupies residues 151–171; the sequence is GTVLALLTGSFDSSSALFLLY. Residues 172–186 lie on the Cytoplasmic side of the membrane; it reads RLLYQNWFPTLNVSR. Residues 187-207 form a helical membrane-spanning segment; sequence FFTLYLIVPVFILACQLTIMP. The Vacuolar segment spans residues 208-302; it reads HSSYKTVNHI…KSAYEQIKSP (95 aa). Ser-238, Ser-249, and Ser-269 each carry phosphoserine. A helical transmembrane segment spans residues 303 to 323; the sequence is WFYLMLLFALVAMLRINYFIA. Residues 324–344 lie on the Cytoplasmic side of the membrane; that stretch reads TVRTQEEYLLNDPDLALKLNS. Residues 345–365 form a helical membrane-spanning segment; sequence IFDMLLPLGGAVSIPFIGLLL. The Vacuolar portion of the chain corresponds to 366–385; that stretch reads DHTDTLSTLTILFTTSTAIG. Residues 386 to 406 traverse the membrane as a helical segment; that stretch reads VFGLIPNSFTWNLIGIVLLVV. At 407–421 the chain is on the cytoplasmic side; the sequence is YRPFYYTVVSDYSSK. A helical transmembrane segment spans residues 422–442; sequence VFGFDTFGTVYGLLSCICGIF. Residues 443–462 are Vacuolar-facing; that stretch reads NMSQNLLDKWTHTTFNMNPF. The helical transmembrane segment at 463–483 threads the bilayer; that stretch reads PINLTLVILTVVFSLTLTFYI. At 484 to 504 the chain is on the cytoplasmic side; the sequence is RSQILPKPVNERGLSSNYQTI.

This sequence belongs to the SLC43A transporter (TC 2.A.1.44) family.

It is found in the vacuole membrane. The protein is Protein FMP42 (FMP42) of Saccharomyces cerevisiae (strain ATCC 204508 / S288c) (Baker's yeast).